Here is a 289-residue protein sequence, read N- to C-terminus: 33 kDa chaperonin (289 aa).

Intrachain disulfides connect Cys229–Cys231 and Cys262–Cys265.

It belongs to the HSP33 family. Post-translationally, under oxidizing conditions two disulfide bonds are formed involving the reactive cysteines. Under reducing conditions zinc is bound to the reactive cysteines and the protein is inactive.

It is found in the cytoplasm. Functionally, redox regulated molecular chaperone. Protects both thermally unfolding and oxidatively damaged proteins from irreversible aggregation. Plays an important role in the bacterial defense system toward oxidative stress. The chain is 33 kDa chaperonin from Pectobacterium atrosepticum (strain SCRI 1043 / ATCC BAA-672) (Erwinia carotovora subsp. atroseptica).